The chain runs to 20 residues: Cytochrome c oxidase subunit 6A2, mitochondrial (20 aa).

The tract at residues 1–20 (ASGAKGDHGGAGASTXXLLT) is disordered.

This sequence belongs to the cytochrome c oxidase subunit 6A family. Component of the cytochrome c oxidase (complex IV, CIV), a multisubunit enzyme composed of 14 subunits. The complex is composed of a catalytic core of 3 subunits MT-CO1, MT-CO2 and MT-CO3, encoded in the mitochondrial DNA, and 11 supernumerary subunits COX4I, COX5A, COX5B, COX6A, COX6B, COX6C, COX7A, COX7B, COX7C, COX8 and NDUFA4, which are encoded in the nuclear genome. The complex exists as a monomer or a dimer and forms supercomplexes (SCs) in the inner mitochondrial membrane with NADH-ubiquinone oxidoreductase (complex I, CI) and ubiquinol-cytochrome c oxidoreductase (cytochrome b-c1 complex, complex III, CIII), resulting in different assemblies (supercomplex SCI(1)III(2)IV(1) and megacomplex MCI(2)III(2)IV(2)). Heart specific isoform.

It is found in the mitochondrion inner membrane. It functions in the pathway energy metabolism; oxidative phosphorylation. Its function is as follows. Component of the cytochrome c oxidase, the last enzyme in the mitochondrial electron transport chain which drives oxidative phosphorylation. The respiratory chain contains 3 multisubunit complexes succinate dehydrogenase (complex II, CII), ubiquinol-cytochrome c oxidoreductase (cytochrome b-c1 complex, complex III, CIII) and cytochrome c oxidase (complex IV, CIV), that cooperate to transfer electrons derived from NADH and succinate to molecular oxygen, creating an electrochemical gradient over the inner membrane that drives transmembrane transport and the ATP synthase. Cytochrome c oxidase is the component of the respiratory chain that catalyzes the reduction of oxygen to water. Electrons originating from reduced cytochrome c in the intermembrane space (IMS) are transferred via the dinuclear copper A center (CU(A)) of subunit 2 and heme A of subunit 1 to the active site in subunit 1, a binuclear center (BNC) formed by heme A3 and copper B (CU(B)). The BNC reduces molecular oxygen to 2 water molecules unsing 4 electrons from cytochrome c in the IMS and 4 protons from the mitochondrial matrix. Plays a role in the assembly and stabilization of complex IV. The polypeptide is Cytochrome c oxidase subunit 6A2, mitochondrial (COX6A2) (Canis lupus familiaris (Dog)).